We begin with the raw amino-acid sequence, 307 residues long: UDP-N-acetylenolpyruvoylglucosamine reductase (307 aa).

The FAD-binding PCMH-type domain maps to 27 to 193 (RVGGPADVVF…LDAVFEGLAD (167 aa)). Residue Arg172 is part of the active site. The active-site Proton donor is Ser222. Glu299 is a catalytic residue.

Belongs to the MurB family. Requires FAD as cofactor.

Its subcellular location is the cytoplasm. It carries out the reaction UDP-N-acetyl-alpha-D-muramate + NADP(+) = UDP-N-acetyl-3-O-(1-carboxyvinyl)-alpha-D-glucosamine + NADPH + H(+). The protein operates within cell wall biogenesis; peptidoglycan biosynthesis. In terms of biological role, cell wall formation. The protein is UDP-N-acetylenolpyruvoylglucosamine reductase of Caulobacter sp. (strain K31).